The chain runs to 224 residues: Redox-sensing transcriptional repressor Rex (224 aa).

The H-T-H motif DNA-binding region spans 17–56 (RYHRYLEELLKNDVKRISSRELSEKMGVTASQIRQDLNNF). 91–96 (GAGNLG) is a binding site for NAD(+).

Belongs to the transcriptional regulatory Rex family. As to quaternary structure, homodimer.

The protein resides in the cytoplasm. In terms of biological role, modulates transcription in response to changes in cellular NADH/NAD(+) redox state. In Thermoanaerobacter pseudethanolicus (strain ATCC 33223 / 39E) (Clostridium thermohydrosulfuricum), this protein is Redox-sensing transcriptional repressor Rex.